The following is a 231-amino-acid chain: Adenosylcobinamide-GDP ribazoletransferase (231 aa).

A run of 5 helical transmembrane segments spans residues 28 to 48 (LWLFPYAAILIALIVSVPHFI), 97 to 117 (TGAGGVAVVVVYFLLLYTLLY), 121 to 141 (FWEIALSQVLAKYSMLLLMLL), 162 to 182 (VFIGAVPVVLLCYKVGIESLA), and 209 to 229 (VIGSANCLTFAASLSALTIAG).

This sequence belongs to the CobS family. Mg(2+) serves as cofactor.

The protein resides in the cell membrane. It catalyses the reaction alpha-ribazole + adenosylcob(III)inamide-GDP = adenosylcob(III)alamin + GMP + H(+). The catalysed reaction is alpha-ribazole 5'-phosphate + adenosylcob(III)inamide-GDP = adenosylcob(III)alamin 5'-phosphate + GMP + H(+). It participates in cofactor biosynthesis; adenosylcobalamin biosynthesis; adenosylcobalamin from cob(II)yrinate a,c-diamide: step 7/7. Its function is as follows. Joins adenosylcobinamide-GDP and alpha-ribazole to generate adenosylcobalamin (Ado-cobalamin). Also synthesizes adenosylcobalamin 5'-phosphate from adenosylcobinamide-GDP and alpha-ribazole 5'-phosphate. In Archaeoglobus fulgidus (strain ATCC 49558 / DSM 4304 / JCM 9628 / NBRC 100126 / VC-16), this protein is Adenosylcobinamide-GDP ribazoletransferase (cobS2).